The sequence spans 338 residues: 4-hydroxy-2-oxovalerate aldolase (338 aa).

Residues 6 to 256 (IHIVDTTLRD…RTGVDFYKVM (251 aa)) form the Pyruvate carboxyltransferase domain. 14–15 (RD) serves as a coordination point for substrate. Aspartate 15 lines the Mn(2+) pocket. The active-site Proton acceptor is the histidine 18. Positions 168 and 195 each coordinate substrate. Mn(2+)-binding residues include histidine 195 and histidine 197. Tyrosine 286 is a binding site for substrate.

This sequence belongs to the 4-hydroxy-2-oxovalerate aldolase family.

The enzyme catalyses (S)-4-hydroxy-2-oxopentanoate = acetaldehyde + pyruvate. The sequence is that of 4-hydroxy-2-oxovalerate aldolase from Moorella thermoacetica (strain ATCC 39073 / JCM 9320).